A 339-amino-acid chain; its full sequence is Tetraacyldisaccharide 4'-kinase (339 aa).

44–51 (TVGGTGKT) is a binding site for ATP.

The protein belongs to the LpxK family.

The enzyme catalyses a lipid A disaccharide + ATP = a lipid IVA + ADP + H(+). It functions in the pathway glycolipid biosynthesis; lipid IV(A) biosynthesis; lipid IV(A) from (3R)-3-hydroxytetradecanoyl-[acyl-carrier-protein] and UDP-N-acetyl-alpha-D-glucosamine: step 6/6. In terms of biological role, transfers the gamma-phosphate of ATP to the 4'-position of a tetraacyldisaccharide 1-phosphate intermediate (termed DS-1-P) to form tetraacyldisaccharide 1,4'-bis-phosphate (lipid IVA). The polypeptide is Tetraacyldisaccharide 4'-kinase (Bdellovibrio bacteriovorus (strain ATCC 15356 / DSM 50701 / NCIMB 9529 / HD100)).